The sequence spans 281 residues: Elongation factor Ts (281 aa).

The tract at residues 79–82 (TDFV) is involved in Mg(2+) ion dislocation from EF-Tu.

The protein belongs to the EF-Ts family.

The protein resides in the cytoplasm. Functionally, associates with the EF-Tu.GDP complex and induces the exchange of GDP to GTP. It remains bound to the aminoacyl-tRNA.EF-Tu.GTP complex up to the GTP hydrolysis stage on the ribosome. This is Elongation factor Ts from Wolbachia pipientis subsp. Culex pipiens (strain wPip).